We begin with the raw amino-acid sequence, 290 residues long: 4-hydroxy-3-methylbut-2-enyl diphosphate reductase (290 aa).

Position 12 (Cys-12) interacts with [4Fe-4S] cluster. (2E)-4-hydroxy-3-methylbut-2-enyl diphosphate is bound by residues His-50 and His-83. Dimethylallyl diphosphate is bound by residues His-50 and His-83. The isopentenyl diphosphate site is built by His-50 and His-83. Cys-105 is a binding site for [4Fe-4S] cluster. Position 133 (His-133) interacts with (2E)-4-hydroxy-3-methylbut-2-enyl diphosphate. A dimethylallyl diphosphate-binding site is contributed by His-133. His-133 serves as a coordination point for isopentenyl diphosphate. Glu-135 serves as the catalytic Proton donor. Thr-173 serves as a coordination point for (2E)-4-hydroxy-3-methylbut-2-enyl diphosphate. Cys-202 contacts [4Fe-4S] cluster. (2E)-4-hydroxy-3-methylbut-2-enyl diphosphate contacts are provided by Ser-230, Asn-232, and Ser-274. 3 residues coordinate dimethylallyl diphosphate: Ser-230, Asn-232, and Ser-274. Residues Ser-230, Asn-232, and Ser-274 each contribute to the isopentenyl diphosphate site.

The protein belongs to the IspH family. [4Fe-4S] cluster is required as a cofactor.

It carries out the reaction isopentenyl diphosphate + 2 oxidized [2Fe-2S]-[ferredoxin] + H2O = (2E)-4-hydroxy-3-methylbut-2-enyl diphosphate + 2 reduced [2Fe-2S]-[ferredoxin] + 2 H(+). The catalysed reaction is dimethylallyl diphosphate + 2 oxidized [2Fe-2S]-[ferredoxin] + H2O = (2E)-4-hydroxy-3-methylbut-2-enyl diphosphate + 2 reduced [2Fe-2S]-[ferredoxin] + 2 H(+). The protein operates within isoprenoid biosynthesis; dimethylallyl diphosphate biosynthesis; dimethylallyl diphosphate from (2E)-4-hydroxy-3-methylbutenyl diphosphate: step 1/1. It functions in the pathway isoprenoid biosynthesis; isopentenyl diphosphate biosynthesis via DXP pathway; isopentenyl diphosphate from 1-deoxy-D-xylulose 5-phosphate: step 6/6. Catalyzes the conversion of 1-hydroxy-2-methyl-2-(E)-butenyl 4-diphosphate (HMBPP) into a mixture of isopentenyl diphosphate (IPP) and dimethylallyl diphosphate (DMAPP). Acts in the terminal step of the DOXP/MEP pathway for isoprenoid precursor biosynthesis. This Nitratidesulfovibrio vulgaris (strain DP4) (Desulfovibrio vulgaris) protein is 4-hydroxy-3-methylbut-2-enyl diphosphate reductase.